Here is a 138-residue protein sequence, read N- to C-terminus: Acidic phospholipase A2 5 (138 aa).

An N-terminal signal peptide occupies residues 1 to 16 (MRTLWIVAVWLIGVEG). 7 cysteine pairs are disulfide-bonded: C42–C131, C44–C60, C59–C111, C65–C138, C66–C104, C73–C97, and C91–C102. 3 residues coordinate Ca(2+): Y43, G45, and G47. Residue H63 is part of the active site. D64 provides a ligand contact to Ca(2+). The active site involves D105.

Belongs to the phospholipase A2 family. Group II subfamily. D49 sub-subfamily. Ca(2+) serves as cofactor. Expressed by the venom gland.

The protein localises to the secreted. It carries out the reaction a 1,2-diacyl-sn-glycero-3-phosphocholine + H2O = a 1-acyl-sn-glycero-3-phosphocholine + a fatty acid + H(+). PLA2 catalyzes the calcium-dependent hydrolysis of the 2-acyl groups in 3-sn-phosphoglycerides. This Echis ocellatus (Ocellated saw-scaled viper) protein is Acidic phospholipase A2 5.